The chain runs to 543 residues: Ribonuclease Y (543 aa).

Residues 4-24 form a helical membrane-spanning segment; sequence IIMIPVATAIVSLLVGTVTGY. The KH domain maps to 233–296; the sequence is TVSVVDLPNE…EIAKRAMERL (64 aa). In terms of domain architecture, HD spans 359-452; it reads VLSHSIEVGK…VVAADTISSA (94 aa).

It belongs to the RNase Y family.

The protein resides in the cell membrane. Functionally, endoribonuclease that initiates mRNA decay. The protein is Ribonuclease Y of Lactobacillus acidophilus (strain ATCC 700396 / NCK56 / N2 / NCFM).